Here is a 152-residue protein sequence, read N- to C-terminus: Protein-export protein SecB (152 aa).

Belongs to the SecB family. In terms of assembly, homotetramer, a dimer of dimers. One homotetramer interacts with 1 SecA dimer.

It localises to the cytoplasm. Functionally, one of the proteins required for the normal export of preproteins out of the cell cytoplasm. It is a molecular chaperone that binds to a subset of precursor proteins, maintaining them in a translocation-competent state. It also specifically binds to its receptor SecA. The protein is Protein-export protein SecB of Rickettsia akari (strain Hartford).